A 190-amino-acid polypeptide reads, in one-letter code: Frizzled-6 (190 aa).

In terms of domain architecture, FZ spans 1-20 (FGFAWPEELECSRLVNCDET). The Extracellular segment spans residues 1 to 89 (FGFAWPEELE…NYELDVAKSF (89 aa)). A helical membrane pass occupies residues 90–110 (IGIVSIFCLCATLFTFLTFLI). Topologically, residues 111-121 (DVKRFRYPERP) are cytoplasmic. Residues 122–142 (IIYYSVCYSIVSLMYFIGFLL) form a helical membrane-spanning segment. At 143–169 (GNRTACNKADDKLEIGETVVLGSQNKA) the chain is on the extracellular side. A glycan (N-linked (GlcNAc...) asparagine) is linked at Asn-144. Residues 170 to 190 (CTVLFMVLYFFTMAGTIWWVI) traverse the membrane as a helical segment.

The protein belongs to the G-protein coupled receptor Fz/Smo family.

It localises to the membrane. The protein localises to the cell membrane. It is found in the cell surface. Its subcellular location is the apical cell membrane. The protein resides in the cytoplasmic vesicle membrane. Receptor for Wnt proteins. Most of frizzled receptors are coupled to the beta-catenin canonical signaling pathway, which leads to the activation of disheveled proteins, inhibition of GSK-3 kinase, nuclear accumulation of beta-catenin and activation of Wnt target genes. A second signaling pathway involving PKC and calcium fluxes has been seen for some family members, but it is not yet clear if it represents a distinct pathway or if it can be integrated in the canonical pathway, as PKC seems to be required for Wnt-mediated inactivation of GSK-3 kinase. Both pathways seem to involve interactions with G-proteins. Activation by Wnt5A stimulates PKC activity via a G-protein-dependent mechanism. Involved in transduction and intercellular transmission of polarity information during tissue morphogenesis and/or in differentiated tissues. Together with FZD3, may be involved in the neural tube closure and plays a role in the regulation of the establishment of planar cell polarity (PCP), particularly in the orientation of asymmetric bundles of stereocilia on the apical faces of a subset of auditory and vestibular sensory cells located in the inner ear. The polypeptide is Frizzled-6 (FZD6) (Gallus gallus (Chicken)).